The sequence spans 305 residues: Ribonuclease BN (305 aa).

Positions 64, 66, 68, 69, 141, 212, and 270 each coordinate Zn(2+). The Proton acceptor role is filled by Asp-68.

This sequence belongs to the RNase Z family. RNase BN subfamily. Homodimer. Zn(2+) serves as cofactor.

Zinc phosphodiesterase, which has both exoribonuclease and endoribonuclease activities. The sequence is that of Ribonuclease BN from Escherichia coli O7:K1 (strain IAI39 / ExPEC).